The following is a 107-amino-acid chain: Glutaredoxin 4 (107 aa).

Residues 4–106 enclose the Glutaredoxin domain; that stretch reads LDKIKKQISE…TLLAEVAAKH (103 aa). Lysine 21 lines the glutathione pocket. Cysteine 29 serves as a coordination point for [2Fe-2S] cluster. Residues arginine 58, phenylalanine 70, and 83 to 84 contribute to the glutathione site; that span reads CD.

The protein belongs to the glutaredoxin family. Monothiol subfamily. Homodimer.

The protein resides in the cytoplasm. Its function is as follows. Monothiol glutaredoxin involved in the biogenesis of iron-sulfur clusters. This Haemophilus influenzae (strain 86-028NP) protein is Glutaredoxin 4 (grxD).